Here is a 466-residue protein sequence, read N- to C-terminus: Chromosomal replication initiator protein DnaA (466 aa).

Residues 1 to 86 (MSLSLWQQCL…EVGTKPVTQT (86 aa)) form a domain I, interacts with DnaA modulators region. The segment at 86–129 (TLKTPVHNVVAPAQTTTAQPQRVAPAARSGWDNVPAPAEPTYRS) is domain II. Positions 130-346 (NVNVKHTFDN…GALNRVIANA (217 aa)) are domain III, AAA+ region. 4 residues coordinate ATP: Gly174, Gly176, Lys177, and Thr178. A domain IV, binds dsDNA region spans residues 347 to 466 (NFTGRAITID…FSNLIRTLSS (120 aa)).

This sequence belongs to the DnaA family. As to quaternary structure, oligomerizes as a right-handed, spiral filament on DNA at oriC.

It is found in the cytoplasm. Functionally, plays an essential role in the initiation and regulation of chromosomal replication. ATP-DnaA binds to the origin of replication (oriC) to initiate formation of the DNA replication initiation complex once per cell cycle. Binds the DnaA box (a 9 base pair repeat at the origin) and separates the double-stranded (ds)DNA. Forms a right-handed helical filament on oriC DNA; dsDNA binds to the exterior of the filament while single-stranded (ss)DNA is stabiized in the filament's interior. The ATP-DnaA-oriC complex binds and stabilizes one strand of the AT-rich DNA unwinding element (DUE), permitting loading of DNA polymerase. After initiation quickly degrades to an ADP-DnaA complex that is not apt for DNA replication. Binds acidic phospholipids. The protein is Chromosomal replication initiator protein DnaA of Salmonella agona (strain SL483).